The chain runs to 230 residues: Flagellar L-ring protein (230 aa).

Residues 1-15 (MSRLPSLSRPCLAIA) form the signal peptide. Cys16 carries the N-palmitoyl cysteine lipid modification. Cys16 carries S-diacylglycerol cysteine lipidation.

The protein belongs to the FlgH family. As to quaternary structure, the basal body constitutes a major portion of the flagellar organelle and consists of four rings (L,P,S, and M) mounted on a central rod.

The protein localises to the cell outer membrane. The protein resides in the bacterial flagellum basal body. Assembles around the rod to form the L-ring and probably protects the motor/basal body from shearing forces during rotation. In Xanthomonas axonopodis pv. citri (strain 306), this protein is Flagellar L-ring protein.